The sequence spans 274 residues: Aliphatic sulfonates import ATP-binding protein SsuB 2 (274 aa).

The ABC transporter domain occupies 21 to 235 (VQLRNVVRQF…DSGQAGFQLI (215 aa)). 53–60 (GASGSGKT) contacts ATP.

This sequence belongs to the ABC transporter superfamily. Aliphatic sulfonates importer (TC 3.A.1.17.2) family. As to quaternary structure, the complex is composed of two ATP-binding proteins (SsuB), two transmembrane proteins (SsuC) and a solute-binding protein (SsuA).

It is found in the cell inner membrane. The enzyme catalyses ATP + H2O + aliphatic sulfonate-[sulfonate-binding protein]Side 1 = ADP + phosphate + aliphatic sulfonateSide 2 + [sulfonate-binding protein]Side 1.. Its function is as follows. Part of the ABC transporter complex SsuABC involved in aliphatic sulfonates import. Responsible for energy coupling to the transport system. This Pseudomonas syringae pv. syringae (strain B728a) protein is Aliphatic sulfonates import ATP-binding protein SsuB 2.